A 231-amino-acid chain; its full sequence is Putative cobalt transport protein CbiM 1 (231 aa).

A run of 6 helical transmembrane segments spans residues 6-26 (GFLP…FLIY), 41-61 (VLPL…VDIP), 79-99 (FFGP…QALL), 107-127 (TLGA…WLVF), 136-156 (VPLG…TYLI), and 172-192 (LTAF…ISII).

This sequence belongs to the CbiM family. Forms an energy-coupling factor (ECF) transporter complex composed of an ATP-binding protein (A component, CbiO), a transmembrane protein (T component, CbiQ) and 2 possible substrate-capture proteins (S components, CbiM and CbiN) of unknown stoichimetry.

It localises to the cell membrane. Its pathway is cofactor biosynthesis; adenosylcobalamin biosynthesis. Its function is as follows. Part of the energy-coupling factor (ECF) transporter complex CbiMNOQ involved in cobalt import. The chain is Putative cobalt transport protein CbiM 1 from Methanocorpusculum labreanum (strain ATCC 43576 / DSM 4855 / Z).